The primary structure comprises 446 residues: Glucosylglycerate hydrolase (446 aa).

Residues Tyr-36, 40–43 (WSWD), Tyr-88, Gln-115, and Gly-180 each bind substrate. The active-site Proton donor is the Asp-182. Residues Arg-216 and 375 to 376 (YW) contribute to the substrate site. Glu-419 acts as the Proton acceptor in catalysis. Gln-434 contacts substrate.

Belongs to the glycosyl hydrolase 63 family. As to quaternary structure, homotetramer. Dimer of dimers.

The catalysed reaction is (2R)-2-O-(alpha-D-glucopyranosyl)-glycerate + H2O = (R)-glycerate + D-glucose. Activity is not dependent on divalent cations, but it is enhanced by Mg(2+). Functionally, catalyzes the hydrolysis of glucosylglycerate (GG) to glycerate and glucose. Involved in recovery from nitrogen starvation by promoting the rapid mobilization of the glucosylglycerate that accumulates under these conditions. Can also hydrolyze mannosylglycerate (MG), with tenfold lower efficiency. The chain is Glucosylglycerate hydrolase from Mycolicibacterium hassiacum (strain DSM 44199 / CIP 105218 / JCM 12690 / 3849) (Mycobacterium hassiacum).